An 813-amino-acid chain; its full sequence is Lon protease (813 aa).

One can recognise a Lon N-terminal domain in the interval 30–225; it reads LPILPVRNIV…WLLQLMDKDI (196 aa). 376–383 contacts ATP; it reads GPPGVGKT. The 182-residue stretch at 612–793 folds into the Lon proteolytic domain; sequence DDLAGIVTGL…DEVLAIALLK (182 aa). Active-site residues include Ser699 and Lys742.

The protein belongs to the peptidase S16 family. Homohexamer. Organized in a ring with a central cavity.

It is found in the cytoplasm. The catalysed reaction is Hydrolysis of proteins in presence of ATP.. In terms of biological role, ATP-dependent serine protease that mediates the selective degradation of mutant and abnormal proteins as well as certain short-lived regulatory proteins. Required for cellular homeostasis and for survival from DNA damage and developmental changes induced by stress. Degrades polypeptides processively to yield small peptide fragments that are 5 to 10 amino acids long. Binds to DNA in a double-stranded, site-specific manner. The protein is Lon protease of Cytophaga hutchinsonii (strain ATCC 33406 / DSM 1761 / CIP 103989 / NBRC 15051 / NCIMB 9469 / D465).